A 316-amino-acid chain; its full sequence is Phosphatidylinositol mannoside acyltransferase (316 aa).

The active-site Proton acceptor is His137. Hexadecanoyl-CoA contacts are provided by His137 and Arg175. Residue Glu211 is part of the active site. Residue Glu240 coordinates hexadecanoyl-CoA.

It belongs to the LpxL/LpxM/LpxP family.

It is found in the cell inner membrane. It carries out the reaction a 2,6-O-bis(alpha-D-mannopyranosyl)-1-phosphatidyl-1D-myo-inositol + an acyl-CoA = a 2-O-(alpha-D-mannosyl)-6-O-(6-O-acyl-alpha-D-mannosyl)-1-phosphatidyl-1D-myo-inositol + CoA. It catalyses the reaction a 1,2-diacyl-sn-glycero-3-phospho-[alpha-D-mannopyranosyl-(1&lt;-&gt;6)-D-myo-inositol] + an acyl-CoA = a 1,2-diacyl-sn-glycero-3-phospho-[alpha-D-6-acyl-mannopyranosyl-(1&lt;-&gt;6)-D-myo-inositol] + CoA. The protein operates within phospholipid metabolism; phosphatidylinositol metabolism. In terms of biological role, catalyzes the transfer of a palmitoyl moiety from palmitoyl-CoA to the 6-position of the mannose ring linked to the 2-position of myo-inositol in phosphatidyl-myo-inositol monomannoside (PIM1) or dimannoside (PIM2). The protein is Phosphatidylinositol mannoside acyltransferase of Mycobacterium tuberculosis (strain CDC 1551 / Oshkosh).